The sequence spans 399 residues: Phosphomevalonate dehydratase large subunit (399 aa).

G54, V55, S56, N85, and P86 together coordinate (R)-5-phosphomevalonate. C125 contacts [4Fe-4S] cluster. (R)-5-phosphomevalonate is bound by residues E144 and S145. Positions 298 and 355 each coordinate [4Fe-4S] cluster. A (R)-5-phosphomevalonate-binding site is contributed by K375.

It belongs to the AcnX type II large subunit family. As to quaternary structure, heterodimer composed of a large subunit (PMDh-L) and a small subunit (PMDh-S). It depends on [4Fe-4S] cluster as a cofactor.

The enzyme catalyses (R)-5-phosphomevalonate = (2E)-3-methyl-5-phosphooxypent-2-enoate + H2O. Its pathway is isoprenoid biosynthesis; isopentenyl diphosphate biosynthesis via mevalonate pathway. Its function is as follows. Component of a hydro-lyase that catalyzes the dehydration of mevalonate 5-phosphate (MVA5P) to form trans-anhydromevalonate 5-phosphate (tAHMP). Involved in the archaeal mevalonate (MVA) pathway, which provides fundamental precursors for isoprenoid biosynthesis, such as isopentenyl diphosphate (IPP) and dimethylallyl diphosphate (DMAPP). This chain is Phosphomevalonate dehydratase large subunit, found in Methanothermobacter thermautotrophicus (strain ATCC 29096 / DSM 1053 / JCM 10044 / NBRC 100330 / Delta H) (Methanobacterium thermoautotrophicum).